We begin with the raw amino-acid sequence, 303 residues long: Deoxyhypusine hydroxylase (303 aa).

HEAT-like PBS-type repeat units follow at residues 56–82 and 89–115; these read LKHE…VLQD and VRHE…YAQD. Fe cation contacts are provided by H58, H91, and E92. Residues 139 to 158 are disordered; sequence DSPDTNPYLSVDPAPPAEEK. HEAT-like PBS-type repeat units lie at residues 176–202, 207–233, and 240–266; these read HRYR…GLQI, FRHE…ALER, and VRHE…HVGD. 3 residues coordinate Fe cation: H209, H242, and E243.

The protein belongs to the deoxyhypusine hydroxylase family. Fe(2+) serves as cofactor.

The enzyme catalyses [eIF5A protein]-deoxyhypusine + AH2 + O2 = [eIF5A protein]-hypusine + A + H2O. It participates in protein modification; eIF5A hypusination. Functionally, catalyzes the hydroxylation of the N(6)-(4-aminobutyl)-L-lysine intermediate produced by deoxyhypusine synthase/DHPS on a critical lysine of the eukaryotic translation initiation factor 5A/eIF-5A. This is the second step of the post-translational modification of that lysine into an unusual amino acid residue named hypusine. Hypusination is unique to mature eIF-5A factor and is essential for its function. The chain is Deoxyhypusine hydroxylase (dohh) from Xenopus laevis (African clawed frog).